The chain runs to 232 residues: Probable fimbrial chaperone LpfB (232 aa).

Residues 1-24 (MDRMMKSKFVALALSLFLSQSVLA) form the signal peptide.

Belongs to the periplasmic pilus chaperone family.

Its subcellular location is the periplasm. Its function is as follows. Part of the lpfABCC'DE fimbrial operon. LP fimbriae may participate in the interaction with eukaryotic cells by assisting in microcolony formation. The sequence is that of Probable fimbrial chaperone LpfB (lpfB) from Escherichia coli O157:H7.